The following is a 399-amino-acid chain: Probable F-box protein At4g22060 (399 aa).

The 37-residue stretch at 12–48 (SWSKLPLDLLIMVFERLGFVDFQRTKSVCLAWLYASR) folds into the F-box domain.

The sequence is that of Probable F-box protein At4g22060 from Arabidopsis thaliana (Mouse-ear cress).